The sequence spans 255 residues: Hydroxyacylglutathione hydrolase (255 aa).

Positions 56, 58, 60, 61, 114, 133, and 171 each coordinate Zn(2+).

The protein belongs to the metallo-beta-lactamase superfamily. Glyoxalase II family. Monomer. Requires Zn(2+) as cofactor.

The enzyme catalyses an S-(2-hydroxyacyl)glutathione + H2O = a 2-hydroxy carboxylate + glutathione + H(+). It participates in secondary metabolite metabolism; methylglyoxal degradation; (R)-lactate from methylglyoxal: step 2/2. Its function is as follows. Thiolesterase that catalyzes the hydrolysis of S-D-lactoyl-glutathione to form glutathione and D-lactic acid. The sequence is that of Hydroxyacylglutathione hydrolase from Rhodopseudomonas palustris (strain ATCC BAA-98 / CGA009).